The chain runs to 280 residues: Ribosomal RNA small subunit methyltransferase A (280 aa).

6 residues coordinate S-adenosyl-L-methionine: His-13, Leu-15, Gly-40, Glu-61, Asp-85, and Asn-106. Residues 258-280 (RPPADVEDANAPHTEQGKGDNSQ) are disordered.

Belongs to the class I-like SAM-binding methyltransferase superfamily. rRNA adenine N(6)-methyltransferase family. RsmA subfamily.

It localises to the cytoplasm. It catalyses the reaction adenosine(1518)/adenosine(1519) in 16S rRNA + 4 S-adenosyl-L-methionine = N(6)-dimethyladenosine(1518)/N(6)-dimethyladenosine(1519) in 16S rRNA + 4 S-adenosyl-L-homocysteine + 4 H(+). Specifically dimethylates two adjacent adenosines (A1518 and A1519) in the loop of a conserved hairpin near the 3'-end of 16S rRNA in the 30S particle. May play a critical role in biogenesis of 30S subunits. This chain is Ribosomal RNA small subunit methyltransferase A, found in Alcanivorax borkumensis (strain ATCC 700651 / DSM 11573 / NCIMB 13689 / SK2).